The primary structure comprises 348 residues: uncharacterized protein (348 aa).

It is found in the virion. This is an uncharacterized protein from Acanthamoeba polyphaga mimivirus (APMV).